Consider the following 242-residue polypeptide: MNDVIIRQLAHLIPYQPLWEAMQTFTARRQSQTTDEIWFLEHEPVFTQGLAGKPEHILNSGNIPLIRTDRGGQVTYHGPGQLMMYLLLDLNRLGLSTRTFVRTIENTVAESLQEWGIPAQGKETAPGVYVDDKKICSIGLRVRKGFSYHGLALNVAMDLTPFSCINPCGFKGLMMTQIQDYVNPIEMDAVKRTIIPLFLKNFGYNQPAIMVETSLEFLIDDHLRSFSEKLGERETVTNSRQN.

Residues 31-206 (SQTTDEIWFL…LFLKNFGYNQ (176 aa)) enclose the BPL/LPL catalytic domain. Substrate contacts are provided by residues 70–77 (RGGQVTYH), 137–139 (SIG), and 150–152 (GLA). Cys168 (acyl-thioester intermediate) is an active-site residue.

The protein belongs to the LipB family.

Its subcellular location is the cytoplasm. The enzyme catalyses octanoyl-[ACP] + L-lysyl-[protein] = N(6)-octanoyl-L-lysyl-[protein] + holo-[ACP] + H(+). The protein operates within protein modification; protein lipoylation via endogenous pathway; protein N(6)-(lipoyl)lysine from octanoyl-[acyl-carrier-protein]: step 1/2. Functionally, catalyzes the transfer of endogenously produced octanoic acid from octanoyl-acyl-carrier-protein onto the lipoyl domains of lipoate-dependent enzymes. Lipoyl-ACP can also act as a substrate although octanoyl-ACP is likely to be the physiological substrate. This Coxiella burnetii (strain Dugway 5J108-111) protein is Octanoyltransferase.